Here is a 1026-residue protein sequence, read N- to C-terminus: Translation initiation factor IF-2, chloroplastic (1026 aa).

Residues 1 to 63 (MPSMLVLVGT…KKWLCRYSVS (63 aa)) constitute a chloroplast transit peptide. Residues 158-173 (AEKLEIPKPGNKEGGE) are compositionally biased toward basic and acidic residues. Disordered stretches follow at residues 158-208 (AEKL…TMKS), 230-284 (FNRG…PPVK), and 300-393 (VSEE…KWSK). Residues 178–194 (SQPSANSSNSRNGSYAN) show a composition bias toward polar residues. Positions 254–269 (LAPPQPPFRPQPPVRP) are enriched in pro residues. Basic and acidic residues predominate over residues 306-317 (SSVKSKERKPIL). Basic residues predominate over residues 384-393 (SGRKGRKWSK). Residues 499–672 (DRPPVITIMG…MLVAELQELK (174 aa)) enclose the tr-type G domain. A G1 region spans residues 508 to 515 (GHVDHGKT). GTP is bound at residue 508–515 (GHVDHGKT). Positions 533 to 537 (GITQG) are G2. The segment at 558-561 (DTPG) is G3. GTP-binding positions include 558–562 (DTPGH) and 612–615 (NKID). Positions 612–615 (NKID) are G4. Residues 648 to 650 (SAL) form a G5 region.

Belongs to the TRAFAC class translation factor GTPase superfamily. Classic translation factor GTPase family. IF-2 subfamily.

The protein localises to the plastid. It is found in the chloroplast. Its function is as follows. One of the essential components for the initiation of protein synthesis. Protects formylmethionyl-tRNA from spontaneous hydrolysis and promotes its binding to the 30S ribosomal subunits. Also involved in the hydrolysis of GTP during the formation of the 70S ribosomal complex. The sequence is that of Translation initiation factor IF-2, chloroplastic from Arabidopsis thaliana (Mouse-ear cress).